The primary structure comprises 333 residues: Holliday junction branch migration complex subunit RuvB (333 aa).

The segment at 1–182 (MEERLVSGEV…FGVISRLEYY (182 aa)) is large ATPase domain (RuvB-L). ATP-binding positions include Leu21, Arg22, Gly63, Lys66, Thr67, Thr68, 129 to 131 (EDY), Arg172, Tyr182, and Arg219. A Mg(2+)-binding site is contributed by Thr67. The segment at 183 to 253 (HVDQLAQIIE…LAVEALERLQ (71 aa)) is small ATPAse domain (RuvB-S). Residues 256–333 (RLGLDQIDHK…THLGMEVPKR (78 aa)) form a head domain (RuvB-H) region. 2 residues coordinate DNA: Arg311 and Arg316.

Belongs to the RuvB family. Homohexamer. Forms an RuvA(8)-RuvB(12)-Holliday junction (HJ) complex. HJ DNA is sandwiched between 2 RuvA tetramers; dsDNA enters through RuvA and exits via RuvB. An RuvB hexamer assembles on each DNA strand where it exits the tetramer. Each RuvB hexamer is contacted by two RuvA subunits (via domain III) on 2 adjacent RuvB subunits; this complex drives branch migration. In the full resolvosome a probable DNA-RuvA(4)-RuvB(12)-RuvC(2) complex forms which resolves the HJ.

The protein localises to the cytoplasm. It carries out the reaction ATP + H2O = ADP + phosphate + H(+). Functionally, the RuvA-RuvB-RuvC complex processes Holliday junction (HJ) DNA during genetic recombination and DNA repair, while the RuvA-RuvB complex plays an important role in the rescue of blocked DNA replication forks via replication fork reversal (RFR). RuvA specifically binds to HJ cruciform DNA, conferring on it an open structure. The RuvB hexamer acts as an ATP-dependent pump, pulling dsDNA into and through the RuvAB complex. RuvB forms 2 homohexamers on either side of HJ DNA bound by 1 or 2 RuvA tetramers; 4 subunits per hexamer contact DNA at a time. Coordinated motions by a converter formed by DNA-disengaged RuvB subunits stimulates ATP hydrolysis and nucleotide exchange. Immobilization of the converter enables RuvB to convert the ATP-contained energy into a lever motion, pulling 2 nucleotides of DNA out of the RuvA tetramer per ATP hydrolyzed, thus driving DNA branch migration. The RuvB motors rotate together with the DNA substrate, which together with the progressing nucleotide cycle form the mechanistic basis for DNA recombination by continuous HJ branch migration. Branch migration allows RuvC to scan DNA until it finds its consensus sequence, where it cleaves and resolves cruciform DNA. The sequence is that of Holliday junction branch migration complex subunit RuvB from Geobacillus kaustophilus (strain HTA426).